A 244-amino-acid chain; its full sequence is Mediator of RNA polymerase II transcription subunit 8 (244 aa).

Residues 6–30 (QEQLKTLEQSRQRLVQLTRSLASLI) are a coiled coil.

It belongs to the Mediator complex subunit 8 family. In terms of assembly, component of the Mediator complex.

The protein localises to the nucleus. In terms of biological role, component of the Mediator complex, a coactivator involved in the regulated transcription of nearly all RNA polymerase II-dependent genes. Mediator functions as a bridge to convey information from gene-specific regulatory proteins to the basal RNA polymerase II transcription machinery. Mediator is recruited to promoters by direct interactions with regulatory proteins and serves as a scaffold for the assembly of a functional preinitiation complex with RNA polymerase II and the general transcription factors. The sequence is that of Mediator of RNA polymerase II transcription subunit 8 (med8) from Aspergillus oryzae (strain ATCC 42149 / RIB 40) (Yellow koji mold).